The following is a 400-amino-acid chain: Enoyl-[acyl-carrier-protein] reductase [NADH] 2 (400 aa).

NAD(+) is bound by residues 48–53, 75–76, 112–113, and 141–142; these read GASSGF, FE, DA, and LA. Position 228 (Tyr-228) interacts with substrate. Catalysis depends on Tyr-238, which acts as the Proton donor. NAD(+) is bound by residues Lys-247 and 276–278; that span reads LVT.

The protein belongs to the TER reductase family. Monomer.

The catalysed reaction is a 2,3-saturated acyl-[ACP] + NAD(+) = a (2E)-enoyl-[ACP] + NADH + H(+). Its pathway is lipid metabolism; fatty acid biosynthesis. Its function is as follows. Involved in the final reduction of the elongation cycle of fatty acid synthesis (FAS II). Catalyzes the reduction of a carbon-carbon double bond in an enoyl moiety that is covalently linked to an acyl carrier protein (ACP). This chain is Enoyl-[acyl-carrier-protein] reductase [NADH] 2, found in Vibrio vulnificus (strain YJ016).